The sequence spans 505 residues: ATP synthase subunit alpha (505 aa).

170-177 (GDRQTGKT) contacts ATP.

This sequence belongs to the ATPase alpha/beta chains family. As to quaternary structure, F-type ATPases have 2 components, CF(1) - the catalytic core - and CF(0) - the membrane proton channel. CF(1) has five subunits: alpha(3), beta(3), gamma(1), delta(1), epsilon(1). CF(0) has four main subunits: a(1), b(1), b'(1) and c(9-12).

Its subcellular location is the cellular thylakoid membrane. The catalysed reaction is ATP + H2O + 4 H(+)(in) = ADP + phosphate + 5 H(+)(out). Produces ATP from ADP in the presence of a proton gradient across the membrane. The alpha chain is a regulatory subunit. This Trichodesmium erythraeum (strain IMS101) protein is ATP synthase subunit alpha.